Reading from the N-terminus, the 220-residue chain is Large ribosomal subunit protein uL1 (220 aa).

It belongs to the universal ribosomal protein uL1 family. As to quaternary structure, part of the 50S ribosomal subunit.

Binds directly to 23S rRNA. The L1 stalk is quite mobile in the ribosome, and is involved in E site tRNA release. Its function is as follows. Protein L1 is also a translational repressor protein, it controls the translation of the L11 operon by binding to its mRNA. This chain is Large ribosomal subunit protein uL1, found in Ehrlichia chaffeensis (strain ATCC CRL-10679 / Arkansas).